The primary structure comprises 334 residues: Biotin synthase (334 aa).

The region spanning 55 to 285 (GSSGSIHACS…VHPRKIIKIA (231 aa)) is the Radical SAM core domain. The [4Fe-4S] cluster site is built by Cys-73, Cys-77, and Cys-80. [2Fe-2S] cluster contacts are provided by Cys-152, Cys-213, and Lys-283.

Belongs to the radical SAM superfamily. Biotin synthase family. Homodimer. It depends on [4Fe-4S] cluster as a cofactor. The cofactor is [2Fe-2S] cluster.

It carries out the reaction (4R,5S)-dethiobiotin + (sulfur carrier)-SH + 2 reduced [2Fe-2S]-[ferredoxin] + 2 S-adenosyl-L-methionine = (sulfur carrier)-H + biotin + 2 5'-deoxyadenosine + 2 L-methionine + 2 oxidized [2Fe-2S]-[ferredoxin]. It functions in the pathway cofactor biosynthesis; biotin biosynthesis; biotin from 7,8-diaminononanoate: step 2/2. Its function is as follows. Catalyzes the conversion of dethiobiotin (DTB) to biotin by the insertion of a sulfur atom into dethiobiotin via a radical-based mechanism. The chain is Biotin synthase from Chlorobium phaeobacteroides (strain DSM 266 / SMG 266 / 2430).